We begin with the raw amino-acid sequence, 81 residues long: Control protein C.BamHI (81 aa).

The HTH cro/C1-type domain maps to 13-68; the sequence is VRQIRLSKSNMSQEKLAFECDLHRTYISDIERGTRNVSLDNIEKISKALGVQPKDL. A DNA-binding region (H-T-H motif) is located at residues 25 to 44; the sequence is QEKLAFECDLHRTYISDIER.

In terms of biological role, may help modulate methylase (M) and restriction enzyme (R) expression as cells undergo physiological changes such as sporulation or transformation. The sequence is that of Control protein C.BamHI from Bacillus amyloliquefaciens (Bacillus velezensis).